The primary structure comprises 32 residues: Ranatuerin-3 (32 aa).

Cysteine 23 and cysteine 28 are disulfide-bonded.

This sequence belongs to the frog skin active peptide (FSAP) family. Ranatuerin subfamily. As to expression, expressed by the skin glands.

The protein resides in the secreted. Its function is as follows. Antibacterial activity against Gram-positive bacterium S.aureus (MIC=60 uM). Shows no detectable hemolytic activity towards human erythrocytes. This chain is Ranatuerin-3, found in Aquarana catesbeiana (American bullfrog).